We begin with the raw amino-acid sequence, 227 residues long: 6-phosphogluconolactonase (227 aa).

The protein belongs to the glucosamine/galactosamine-6-phosphate isomerase family. 6-phosphogluconolactonase subfamily.

The catalysed reaction is 6-phospho-D-glucono-1,5-lactone + H2O = 6-phospho-D-gluconate + H(+). Its pathway is carbohydrate degradation; pentose phosphate pathway; D-ribulose 5-phosphate from D-glucose 6-phosphate (oxidative stage): step 2/3. In terms of biological role, hydrolysis of 6-phosphogluconolactone to 6-phosphogluconate. The chain is 6-phosphogluconolactonase (pgl) from Helicobacter pylori (strain J99 / ATCC 700824) (Campylobacter pylori J99).